Here is a 299-residue protein sequence, read N- to C-terminus: Peroxisomal biogenesis factor 19 (299 aa).

The segment at 1–63 is disordered; it reads MAAAEEGCDA…SPGDTAKDAL (63 aa). Ala2 carries the post-translational modification N-acetylalanine. A docking to the peroxisome membrane and binding to PEX3 region spans residues 2 to 56; the sequence is AAAEEGCDAGVEADRELEELLESALDDFDKAKPSPAPPPTTSAPDASGPQKKSPG. The interval 2 to 91 is necessary for PEX19 function on peroxisome biogenesis; the sequence is AAAEEGCDAG…QATAEFEKAM (90 aa). Over residues 16–27 the composition is skewed to acidic residues; it reads RELEELLESALD. Ser35, Ser54, and Ser66 each carry phosphoserine. Thr236 is modified (phosphothreonine). Position 296 is a cysteine methyl ester (Cys296). Residue Cys296 is the site of S-farnesyl cysteine attachment. The propeptide at 297–299 is removed in mature form; the sequence is LIM.

The protein belongs to the peroxin-19 family. In terms of assembly, interacts with a broad range of peroxisomal membrane proteins, including PEX3, PEX10, PEX11A, PEX11B, PEX12, PEX13, PEX14 and PEX16, PXMP2/PMP22, PXMP4/PMP24, SLC25A17/PMP34, ABCD1/ALDP, ABCD2/ALDRP, and ABCD3/PMP70. Also interacts with the tumor suppressor CDKN2A/p19ARF. As to expression, ubiquitous.

Its subcellular location is the cytoplasm. It is found in the peroxisome membrane. Necessary for early peroxisomal biogenesis. Acts both as a cytosolic chaperone and as an import receptor for peroxisomal membrane proteins (PMPs). Binds and stabilizes newly synthesized PMPs in the cytoplasm by interacting with their hydrophobic membrane-spanning domains, and targets them to the peroxisome membrane by binding to the integral membrane protein PEX3. Excludes CDKN2A from the nucleus and prevents its interaction with MDM2, which results in active degradation of TP53. This chain is Peroxisomal biogenesis factor 19 (PEX19), found in Cricetulus griseus (Chinese hamster).